The sequence spans 259 residues: 7-cyano-7-deazaguanine synthase (259 aa).

ATP is bound at residue L32 to L42. 4 residues coordinate Zn(2+): C223, C233, C236, and C239.

The protein belongs to the QueC family. Requires Zn(2+) as cofactor.

The catalysed reaction is 7-carboxy-7-deazaguanine + NH4(+) + ATP = 7-cyano-7-deazaguanine + ADP + phosphate + H2O + H(+). It functions in the pathway purine metabolism; 7-cyano-7-deazaguanine biosynthesis. Catalyzes the ATP-dependent conversion of 7-carboxy-7-deazaguanine (CDG) to 7-cyano-7-deazaguanine (preQ(0)). In Psychrobacter cryohalolentis (strain ATCC BAA-1226 / DSM 17306 / VKM B-2378 / K5), this protein is 7-cyano-7-deazaguanine synthase.